A 213-amino-acid polypeptide reads, in one-letter code: Adenylate kinase (213 aa).

ATP is bound at residue 14–19; it reads GSGKGT. Residues 34-63 form an NMP region; that stretch reads SSGNLLRSAIKASTPLGIKASEYIDEGQLV. Residues Ser35, Arg40, 61-63, 89-92, and Gln96 contribute to the AMP site; these read QLV and GFPR. The interval 129–162 is LID; that stretch reads SRFICPSCNFVYNQSQGFRECPTCHSELVRRSDD. Arg130 is an ATP binding site. Positions 133 and 136 each coordinate Zn(2+). 139-140 provides a ligand contact to ATP; it reads VY. Positions 149 and 152 each coordinate Zn(2+). Positions 159 and 170 each coordinate AMP. ATP is bound at residue Lys198.

It belongs to the adenylate kinase family. As to quaternary structure, monomer.

The protein resides in the cytoplasm. It catalyses the reaction AMP + ATP = 2 ADP. The protein operates within purine metabolism; AMP biosynthesis via salvage pathway; AMP from ADP: step 1/1. In terms of biological role, catalyzes the reversible transfer of the terminal phosphate group between ATP and AMP. Plays an important role in cellular energy homeostasis and in adenine nucleotide metabolism. The chain is Adenylate kinase from Chlamydia felis (strain Fe/C-56) (Chlamydophila felis).